The sequence spans 578 residues: Zinc finger protein with KRAB and SCAN domains 8 (578 aa).

The disordered stretch occupies residues M1–E20. S12 is subject to Phosphoserine. A Glycyl lysine isopeptide (Lys-Gly) (interchain with G-Cter in SUMO2) cross-link involves residue K26. In terms of domain architecture, SCAN box spans R51–I133. Residues A158–Q205 are disordered. Residues N165 to Q205 show a composition bias toward polar residues. Residues K176 and K199 each participate in a glycyl lysine isopeptide (Lys-Gly) (interchain with G-Cter in SUMO2) cross-link. The residue at position 201 (S201) is a Phosphoserine. One can recognise a KRAB domain in the interval E220 to P316. Residues K221, K272, and K288 each participate in a glycyl lysine isopeptide (Lys-Gly) (interchain with G-Cter in SUMO2) cross-link. 2 consecutive C2H2-type zinc fingers follow at residues H322–H344 and Y350–H372. Residues K374 and K376 each participate in a glycyl lysine isopeptide (Lys-Gly) (interchain with G-Cter in SUMO2) cross-link. C2H2-type zinc fingers lie at residues Y378–H400, Y406–H428, Y434–H456, Y462–H484, Y490–H512, Y518–H540, and Y546–H568. Glycyl lysine isopeptide (Lys-Gly) (interchain with G-Cter in SUMO2) cross-links involve residues K413 and K441. K502 participates in a covalent cross-link: Glycyl lysine isopeptide (Lys-Gly) (interchain with G-Cter in SUMO2). A Glycyl lysine isopeptide (Lys-Gly) (interchain with G-Cter in SUMO2) cross-link involves residue K572.

The protein belongs to the krueppel C2H2-type zinc-finger protein family.

The protein resides in the nucleus. May be involved in transcriptional regulation. The protein is Zinc finger protein with KRAB and SCAN domains 8 (ZKSCAN8) of Pan paniscus (Pygmy chimpanzee).